Consider the following 38-residue polypeptide: Lebetin-2-alpha (38 aa).

The segment at 1-38 (GDNKPPKKGPPNGCFGHKIDRIGSHSGLGCNKVDDNKG) is disordered. A disulfide bridge links cysteine 14 with cysteine 30.

It belongs to the natriuretic peptide family. Expressed by the venom gland.

The protein resides in the secreted. Functionally, inhibits platelet aggregation induced by thrombin, collagen and PAF-acether. Human platelet aggregation induced by thrombin is inhibited by synthetic lebetin-1-alpha with (IC(50)=140 nM). In vivo, inhibits collagen-induced thrombocytopenia in rats. Is not toxic upon intravenous injection into mice and rats. Its function is as follows. Inhibits platelet aggregation induced by thrombin, collagen and PAF-acether. Human platelet aggregation induced by thrombin is inhibited by synthetic lebetin-1-beta with (IC(50)=32 nM). In vivo, inhibits collagen-induced thrombocytopenia in rats. Is not toxic upon intravenous injection into mice and rats. Inhibits platelet aggregation induced by thrombin, collagen and PAF-acether. Human platelet aggregation induced by thrombin is inhibited by synthetic lebetin-1-gamma with (IC(50)=5 nM). In vivo, inhibits collagen-induced thrombocytopenia in rats. Is not toxic upon intravenous injection into mice and rats. In terms of biological role, inhibits platelet aggregation induced by thrombin, collagen and PAF-acether. Human platelet aggregation induced by thrombin is inhibited by synthetic lebetin-1-alpha with (IC(50)=2.5 nM). In vivo, inhibits collagen-induced thrombocytopenia in rats. Is not toxic upon intravenous injection into mice and rats. Functionally, inhibits platelet aggregation induced by thrombin, collagen and PAF-acether. Human platelet aggregation induced by thrombin is inhibited by synthetic lebetin-1-alpha with (IC(50)=2.8 nM). In vivo, inhibits collagen-induced thrombocytopenia in rats. Is not toxic upon intravenous injection into mice and rats. This is Lebetin-2-alpha from Macrovipera lebetinus (Levantine viper).